Consider the following 65-residue polypeptide: uncharacterized protein (65 aa).

A disordered region spans residues 1–22; that stretch reads MEKETPQQETKQSTNKESGFFD. A compositionally biased stretch (polar residues) spans 7–17; it reads QQETKQSTNKE. Residues 22 to 65 are a coiled coil; it reads DEIIKRTNQLLEKEKELHEKYNKEITSQQDQIDQLKKKINQLKY.

This is an uncharacterized protein from Dictyostelium discoideum (Social amoeba).